A 200-amino-acid polypeptide reads, in one-letter code: uncharacterized protein (200 aa).

The Response regulatory domain maps to 3 to 119 (RLFIAEDQRM…DLADAIRKCV (117 aa)). D54 is modified (4-aspartylphosphate). The HTH luxR-type domain maps to 133–198 (MMRDENPLTV…EAASIAEEKG (66 aa)). The segment at residues 157–176 (TKDITLELYLSQGTVRNYIS) is a DNA-binding region (H-T-H motif).

Phosphorylated by YvfT.

It is found in the cytoplasm. Member of the two-component regulatory system YvfT/YvfU. This is an uncharacterized protein from Bacillus subtilis (strain 168).